A 609-amino-acid polypeptide reads, in one-letter code: Glutamine--fructose-6-phosphate aminotransferase [isomerizing] (609 aa).

Cys-2 (nucleophile; for GATase activity) is an active-site residue. The region spanning 2 to 218 (CGIVGAIAQR…EGDIAEITRR (217 aa)) is the Glutamine amidotransferase type-2 domain. SIS domains lie at 286–426 (ADEL…LKGL) and 458–599 (LAED…VDQP). The active-site For Fru-6P isomerization activity is the Lys-604.

Homodimer.

The protein localises to the cytoplasm. The enzyme catalyses D-fructose 6-phosphate + L-glutamine = D-glucosamine 6-phosphate + L-glutamate. Catalyzes the first step in hexosamine metabolism, converting fructose-6P into glucosamine-6P using glutamine as a nitrogen source. This Shigella flexneri protein is Glutamine--fructose-6-phosphate aminotransferase [isomerizing].